The following is a 99-amino-acid chain: Probable non-specific lipid-transfer protein AKCS9 (99 aa).

Positions 1-33 (MTMKMKMKMSVVCAVVVVALFLIDVGPVAEAVT) are cleaved as a signal peptide. Disulfide bonds link Cys-34–Cys-68, Cys-42–Cys-56, Cys-57–Cys-92, and Cys-66–Cys-99.

The protein belongs to the plant LTP family. In terms of tissue distribution, expressed in most tissues except nodules.

Its function is as follows. Potential lipid transfer protein. The sequence is that of Probable non-specific lipid-transfer protein AKCS9 from Vigna unguiculata (Cowpea).